A 490-amino-acid polypeptide reads, in one-letter code: Aspartyl aminopeptidase 4 (490 aa).

Residue histidine 97 coordinates Zn(2+). Position 173 (histidine 173) interacts with substrate. Positions 273, 308, 309, and 362 each coordinate Zn(2+). Glutamate 308 is a binding site for substrate. Residues aspartate 362, histidine 365, lysine 390, and tyrosine 397 each coordinate substrate. Histidine 456 provides a ligand contact to Zn(2+).

Belongs to the peptidase M18 family. As to quaternary structure, tetrahedron-shaped homododecamer built from six homodimers. It depends on Zn(2+) as a cofactor.

The protein resides in the cytoplasm. Its subcellular location is the vacuole lumen. It carries out the reaction Release of an N-terminal aspartate or glutamate from a peptide, with a preference for aspartate.. The metalloproteases inhibitors EDTA and 1.10-phenanthroline both inhibit the activity, whereas bestatin, an inhibitor of most aminopeptidases, does not affect enzyme activity. Aspartyl aminopeptidase that contributes to peptide degradation both in the cytosol and the vacuole. Cells may respond to environmental conditions by changing the distributions of the cytosolic enzyme to the vacuole when cells need more active vacuolar degradation. This is Aspartyl aminopeptidase 4 (APE4) from Saccharomyces cerevisiae (strain ATCC 204508 / S288c) (Baker's yeast).